The primary structure comprises 829 residues: Leucine--tRNA ligase (829 aa).

The 'HIGH' region motif lies at 40 to 50 (PYPSGNIHMGH). The 'KMSKS' region signature appears at 594–598 (KMSKS). An ATP-binding site is contributed by Lys597.

The protein belongs to the class-I aminoacyl-tRNA synthetase family.

The protein localises to the cytoplasm. The catalysed reaction is tRNA(Leu) + L-leucine + ATP = L-leucyl-tRNA(Leu) + AMP + diphosphate. This is Leucine--tRNA ligase from Anaplasma marginale (strain St. Maries).